Reading from the N-terminus, the 354-residue chain is Protein RecA (354 aa).

68–75 is an ATP binding site; it reads GPESSGKT.

Belongs to the RecA family.

The protein resides in the cytoplasm. In terms of biological role, can catalyze the hydrolysis of ATP in the presence of single-stranded DNA, the ATP-dependent uptake of single-stranded DNA by duplex DNA, and the ATP-dependent hybridization of homologous single-stranded DNAs. It interacts with LexA causing its activation and leading to its autocatalytic cleavage. This chain is Protein RecA, found in Synechocystis sp. (strain ATCC 27184 / PCC 6803 / Kazusa).